Consider the following 306-residue polypeptide: Shugoshin (306 aa).

Residues 28–75 are a coiled coil; it reads NFKSTNESLIKKNLQLKQQLSQCTKALEKLRNENIALREQNQELIDAT. Disordered regions lie at residues 122-196 and 223-306; these read PEPS…GRRS and IAPS…DTFF. Residues 133–161 are compositionally biased toward basic and acidic residues; that stretch reads PKMECNLEKLDESPVRNFPRSDYEEENKS. The segment covering 167 to 181 has biased composition (polar residues); it reads NGPSSSSSMTQNLEN. Pro residues predominate over residues 230 to 241; it reads GGPPKKAPPRKA.

The protein belongs to the shugoshin family.

Its subcellular location is the nucleus. It is found in the chromosome. It localises to the centromere. Its function is as follows. Plays a central role in chromosome cohesion during cell division by preventing premature dissociation of cohesin complex from centromeres after prophase, when most of cohesin complex dissociates from chromosomes arms. The polypeptide is Shugoshin (sgo-1) (Caenorhabditis briggsae).